The chain runs to 368 residues: tRNA(Met) cytidine acetate ligase (368 aa).

ATP-binding positions include 7-20, G96, N152, and R175; that span reads IAEF…HKYL.

This sequence belongs to the TmcAL family.

It localises to the cytoplasm. It carries out the reaction cytidine(34) in elongator tRNA(Met) + acetate + ATP = N(4)-acetylcytidine(34) in elongator tRNA(Met) + AMP + diphosphate. Catalyzes the formation of N(4)-acetylcytidine (ac(4)C) at the wobble position of elongator tRNA(Met), using acetate and ATP as substrates. First activates an acetate ion to form acetyladenylate (Ac-AMP) and then transfers the acetyl group to tRNA to form ac(4)C34. In Streptococcus pyogenes serotype M5 (strain Manfredo), this protein is tRNA(Met) cytidine acetate ligase.